A 57-amino-acid polypeptide reads, in one-letter code: LICHRVHGLQTCEPDQKFCFRKTTMFFPNHPVLLMGCTSSCPTEKYSVCCSTDKCNK.

4 disulfide bridges follow: Cys-3–Cys-19, Cys-12–Cys-37, Cys-41–Cys-49, and Cys-50–Cys-55.

Belongs to the three-finger toxin family. Short-chain subfamily. Expressed by the venom gland.

Its subcellular location is the secreted. This toxin binds and inhibits rat muscle adult alpha-1-beta-1-delta-epsilon/CHRNA1-CHRNB1-CHRND-CHRNE (IC(50)=3.1 uM) and fetal alpha-1-beta-1-gamma-delta/CHRNA1-CHRNB1-CHRNG-CHRND (IC(50)=5.6 uM) nicotinic acetylcholine receptors (nAChR). Shows a very low inhibition on rat neuronal alpha-3-beta-2/CHRNA3-CHRNB2 nAChR (IC(50)=50.2 uM) nAChR. Binds to the acetylcholine-binding pocket and acts as a competitive antagonist. Does not inhibit human glycine receptor (homopentamer composed of alpha-1 subunits, GLRA1), but seems to potentiate it (about 2-fold increased activity). The polypeptide is Neurotoxin Oh9-1 (Ophiophagus hannah (King cobra)).